A 178-amino-acid polypeptide reads, in one-letter code: Ribose 1,5-bisphosphate phosphokinase PhnN (178 aa).

9–16 is a binding site for ATP; the sequence is GPSGSGKD.

The protein belongs to the ribose 1,5-bisphosphokinase family.

It carries out the reaction alpha-D-ribose 1,5-bisphosphate + ATP = 5-phospho-alpha-D-ribose 1-diphosphate + ADP. The protein operates within metabolic intermediate biosynthesis; 5-phospho-alpha-D-ribose 1-diphosphate biosynthesis; 5-phospho-alpha-D-ribose 1-diphosphate from D-ribose 5-phosphate (route II): step 3/3. Its function is as follows. Catalyzes the phosphorylation of ribose 1,5-bisphosphate to 5-phospho-D-ribosyl alpha-1-diphosphate (PRPP). This Pantoea vagans (strain C9-1) (Pantoea agglomerans (strain C9-1)) protein is Ribose 1,5-bisphosphate phosphokinase PhnN.